We begin with the raw amino-acid sequence, 245 residues long: Chloride intracellular channel protein 2 (245 aa).

The segment at 1-96 (MASLALNTQA…EEFLEKTLAP (96 aa)) is required for insertion into the membrane. A glutathione-binding site is contributed by Glu-25. A G-site motif is present at residues 30 to 33 (CPFC). A disulfide bridge connects residues Cys-30 and Cys-33. A helical membrane pass occupies residues 32 to 52 (FCQRLFMILWLKGVKFNVTTI). Residues 76-239 (NKELKTDFIK…PEDKEIENTY (164 aa)) form the GST C-terminal domain. Glutathione is bound at residue His-227.

It belongs to the chloride channel CLIC family. Monomer. Interacts with TRAPPC2 and RYR2.

The protein resides in the cytoplasm. It localises to the membrane. The enzyme catalyses chloride(in) = chloride(out). It catalyses the reaction tert-butyl hydroperoxide + 2 glutathione = tert-butanol + glutathione disulfide + H2O. The catalysed reaction is cumene hydroperoxide + 2 glutathione = 2-phenylpropan-2-ol + glutathione disulfide + H2O. Functionally, in the soluble state, catalyzes glutaredoxin-like thiol disulfide exchange reactions with reduced glutathione as electron donor. Displays weak glutathione peroxidase activity. Can insert into membranes and form chloride ion channels. Membrane insertion seems to be redox-regulated and may occur only under oxidizing conditions. Modulates the activity of RYR2 and inhibits calcium influx. In Rattus norvegicus (Rat), this protein is Chloride intracellular channel protein 2.